Here is a 218-residue protein sequence, read N- to C-terminus: MATRSPGVVISDDEPGYDLDLFCIPNHYAEDLERVFIPHGLIMDRTERLARDVMKEMGGHHIVALCVLKGGYKFFADLLDYIKALNRNSDRSIPMTVDFIRLKSYCNDQSTGDIKVIGGDDLSTLTGKNVLIVEDIIDTGKTMQTLLSLVRQYNPKMVKVASLLVKRTPRSVGYKPDFVGFEIPDKFVVGYALDYNEYFRDLNHVCVISETGKAKYKA.

An N-acetylalanine modification is found at alanine 2. Lysine 69 lines the GMP pocket. Lysine 103 carries the post-translational modification N6-acetyllysine. Residue lysine 115 forms a Glycyl lysine isopeptide (Lys-Gly) (interchain with G-Cter in SUMO1); alternate linkage. A Glycyl lysine isopeptide (Lys-Gly) (interchain with G-Cter in SUMO2); alternate cross-link involves residue lysine 115. GMP contacts are provided by residues 134-142 (EDIIDTGKT), lysine 166, 186-188 (KFV), and aspartate 194. The active-site Proton acceptor is the aspartate 138. At threonine 142 the chain carries Phosphothreonine. Aspartate 194 contacts Mg(2+).

It belongs to the purine/pyrimidine phosphoribosyltransferase family. Homotetramer. Requires Mg(2+) as cofactor.

Its subcellular location is the cytoplasm. It catalyses the reaction IMP + diphosphate = hypoxanthine + 5-phospho-alpha-D-ribose 1-diphosphate. The catalysed reaction is GMP + diphosphate = guanine + 5-phospho-alpha-D-ribose 1-diphosphate. It functions in the pathway purine metabolism; IMP biosynthesis via salvage pathway; IMP from hypoxanthine: step 1/1. In terms of biological role, converts guanine to guanosine monophosphate, and hypoxanthine to inosine monophosphate. Transfers the 5-phosphoribosyl group from 5-phosphoribosylpyrophosphate onto the purine. Plays a central role in the generation of purine nucleotides through the purine salvage pathway. This Homo sapiens (Human) protein is Hypoxanthine-guanine phosphoribosyltransferase (HPRT1).